Reading from the N-terminus, the 126-residue chain is Small ribosomal subunit protein uS13 (126 aa).

Residues 92 to 126 are disordered; sequence HRMGLPVRGQRTRTNARTRRGRRQTVAGKKKAPGK. Residues 101 to 126 are compositionally biased toward basic residues; it reads QRTRTNARTRRGRRQTVAGKKKAPGK.

It belongs to the universal ribosomal protein uS13 family. Part of the 30S ribosomal subunit. Forms a loose heterodimer with protein S19. Forms two bridges to the 50S subunit in the 70S ribosome.

In terms of biological role, located at the top of the head of the 30S subunit, it contacts several helices of the 16S rRNA. In the 70S ribosome it contacts the 23S rRNA (bridge B1a) and protein L5 of the 50S subunit (bridge B1b), connecting the 2 subunits; these bridges are implicated in subunit movement. Contacts the tRNAs in the A and P-sites. The protein is Small ribosomal subunit protein uS13 of Nostoc punctiforme (strain ATCC 29133 / PCC 73102).